We begin with the raw amino-acid sequence, 743 residues long: Ectonucleotide pyrophosphatase/phosphodiesterase C27A7.3 (743 aa).

Residues 1-23 (MSNRVVDVNSKKTGTSWKKKLMK) are Cytoplasmic-facing. A helical; Signal-anchor for type II membrane protein transmembrane segment spans residues 24 to 44 (IVIWSLAMLSFIAGLVLLGLV). Residues 45–743 (AAATISGSKN…LRRNITTSLW (699 aa)) lie on the Lumenal side of the membrane. Residues aspartate 87 and threonine 123 each contribute to the Zn(2+) site. Catalysis depends on threonine 123, which acts as the Nucleophile. N-linked (GlcNAc...) asparagine glycosylation is present at asparagine 195. Residues aspartate 243, histidine 247, aspartate 286, and histidine 287 each coordinate Zn(2+). Residues asparagine 293 and asparagine 320 are each glycosylated (N-linked (GlcNAc...) asparagine). Histidine 383 is a binding site for Zn(2+). N-linked (GlcNAc...) asparagine glycosylation is found at asparagine 406, asparagine 434, and asparagine 536. Residues aspartate 635, asparagine 637, aspartate 639, isoleucine 641, and aspartate 643 each contribute to the Ca(2+) site. N-linked (GlcNAc...) asparagine glycosylation is present at asparagine 737.

Belongs to the nucleotide pyrophosphatase/phosphodiesterase family. Zn(2+) serves as cofactor. The cofactor is Ca(2+).

It is found in the membrane. In terms of biological role, probable phosphodiesterase. The polypeptide is Ectonucleotide pyrophosphatase/phosphodiesterase C27A7.3 (Caenorhabditis elegans).